We begin with the raw amino-acid sequence, 226 residues long: uncharacterized protein (226 aa).

A helical membrane pass occupies residues 5–25 (IKTVSFAAAAILVVIICTFLI).

Its subcellular location is the cell membrane. This is an uncharacterized protein from Bacillus subtilis (strain 168).